Here is a 149-residue protein sequence, read N- to C-terminus: Small ribosomal subunit protein uS19w (149 aa).

This sequence belongs to the universal ribosomal protein uS19 family.

The protein resides in the cytoplasm. The chain is Small ribosomal subunit protein uS19w (RPS15E) from Arabidopsis thaliana (Mouse-ear cress).